The chain runs to 171 residues: Large ribosomal subunit protein uL22 (171 aa).

Belongs to the universal ribosomal protein uL22 family.

The sequence is that of Large ribosomal subunit protein uL22 (RPL17) from Zea mays (Maize).